A 189-amino-acid chain; its full sequence is Potassium-transporting ATPase KdpC subunit (189 aa).

The helical transmembrane segment at 10–30 (ITLVFCVFFSVFYILILWLFA) threads the bilayer.

It belongs to the KdpC family. The system is composed of three essential subunits: KdpA, KdpB and KdpC.

The protein resides in the cell inner membrane. Functionally, part of the high-affinity ATP-driven potassium transport (or Kdp) system, which catalyzes the hydrolysis of ATP coupled with the electrogenic transport of potassium into the cytoplasm. This subunit acts as a catalytic chaperone that increases the ATP-binding affinity of the ATP-hydrolyzing subunit KdpB by the formation of a transient KdpB/KdpC/ATP ternary complex. This chain is Potassium-transporting ATPase KdpC subunit, found in Bacteroides thetaiotaomicron (strain ATCC 29148 / DSM 2079 / JCM 5827 / CCUG 10774 / NCTC 10582 / VPI-5482 / E50).